The following is a 267-amino-acid chain: MKENRITRLMKQDKKLLLAYYMPEFPVPGATLPVLEALQENGADIIELGMPYSDPIGDGPVIQDAAHKAISHGVTVRSILDLVKQARAGEGCKKITTPILLMGYSNPLIAYGGDCFMADAVEAGVDGLLIPDLPPEESEDFLERARSFGLTVVYLISPVTPPDRIELIDCMSTDFSYCLAVNATTGTGKLDTAGMDEQIAEYLKRVRKHAKKKFVVGFGIKDRERVRKMWELADGAVVGSALLQQVASAKTPEETAAMAAEFWQSLR.

Residues glutamate 47 and aspartate 58 each act as proton acceptor in the active site.

This sequence belongs to the TrpA family. Tetramer of two alpha and two beta chains.

It catalyses the reaction (1S,2R)-1-C-(indol-3-yl)glycerol 3-phosphate + L-serine = D-glyceraldehyde 3-phosphate + L-tryptophan + H2O. It functions in the pathway amino-acid biosynthesis; L-tryptophan biosynthesis; L-tryptophan from chorismate: step 5/5. In terms of biological role, the alpha subunit is responsible for the aldol cleavage of indoleglycerol phosphate to indole and glyceraldehyde 3-phosphate. In Chlorobaculum parvum (strain DSM 263 / NCIMB 8327) (Chlorobium vibrioforme subsp. thiosulfatophilum), this protein is Tryptophan synthase alpha chain.